A 472-amino-acid chain; its full sequence is Uronate isomerase (472 aa).

It belongs to the metallo-dependent hydrolases superfamily. Uronate isomerase family.

The catalysed reaction is D-glucuronate = D-fructuronate. The enzyme catalyses aldehydo-D-galacturonate = keto-D-tagaturonate. The protein operates within carbohydrate metabolism; pentose and glucuronate interconversion. This is Uronate isomerase from Shouchella clausii (strain KSM-K16) (Alkalihalobacillus clausii).